The following is a 386-amino-acid chain: S-adenosylmethionine synthase (386 aa).

Histidine 16 is a binding site for ATP. Aspartate 18 is a binding site for Mg(2+). Glutamate 44 is a K(+) binding site. L-methionine is bound by residues glutamate 57 and glutamine 100. The interval 100 to 110 is flexible loop; it reads QSPDINQGVDR. Residues 164-166, 230-231, aspartate 239, 245-246, alanine 262, and lysine 266 contribute to the ATP site; these read DGK, KF, and RK. Aspartate 239 provides a ligand contact to L-methionine. L-methionine is bound at residue lysine 270.

The protein belongs to the AdoMet synthase family. Homotetramer; dimer of dimers. The cofactor is Mg(2+). K(+) is required as a cofactor.

Its subcellular location is the cytoplasm. It carries out the reaction L-methionine + ATP + H2O = S-adenosyl-L-methionine + phosphate + diphosphate. It functions in the pathway amino-acid biosynthesis; S-adenosyl-L-methionine biosynthesis; S-adenosyl-L-methionine from L-methionine: step 1/1. In terms of biological role, catalyzes the formation of S-adenosylmethionine (AdoMet) from methionine and ATP. The overall synthetic reaction is composed of two sequential steps, AdoMet formation and the subsequent tripolyphosphate hydrolysis which occurs prior to release of AdoMet from the enzyme. In Wolinella succinogenes (strain ATCC 29543 / DSM 1740 / CCUG 13145 / JCM 31913 / LMG 7466 / NCTC 11488 / FDC 602W) (Vibrio succinogenes), this protein is S-adenosylmethionine synthase.